The sequence spans 479 residues: POU domain, class 2, transcription factor 2 (479 aa).

Disordered regions lie at residues 1–86, 166–200, 275–298, 357–393, and 409–479; these read MVHS…AQPH, TQAVTRPTLPDPHLSHPQPPKCLEPPSHPEEPSDL, SSLPSPNQLSSPSLGFDGLPGRRR, PCSAAPMLPSPGKPASYSPHMVTPQGGAGTLPLSQAS, and TLHP…PYQP. Residues 12–37 are compositionally biased toward basic and acidic residues; sequence RMSKPLEAEKQGLDSPSEHTDTERNG. Polar residues predominate over residues 38-60; sequence PDTNHQNPQNKTSPFSVSPTGPS. Positions 76–85 are enriched in pro residues; sequence APLPPQPAQP. Residues 195 to 269 form the POU-specific domain; it reads EEPSDLEELE…LLEKWLNDAE (75 aa). Residues 275–288 are compositionally biased toward low complexity; sequence SSLPSPNQLSSPSL. Positions 297–356 form a DNA-binding region, homeobox; sequence RRKKRTSIETNVRFALEKSFLANQKPTSEEILLIAEQLHMEKEVIRVWFCNRRQKEKRIN. Residues 389 to 410 are leucine-zipper; that stretch reads LSQASSSLSTTVTTLSSAVGTL. Residues 416 to 425 show a composition bias toward gly residues; that stretch reads AGGGGGGGGA.

It belongs to the POU transcription factor family. Class-2 subfamily. Interacts with NR3C1, AR and PGR. Interacts with POU2AF1; the interaction increases POU2F2 transactivation activity. Isoform 3 is B-cell specific. Isoform 5 is expressed in B-cells and the immunoglobulin-expressing T-cell line MOLT-4, but not in the T-cell line BW5147.

The protein resides in the cytoplasm. The protein localises to the nucleus. Its activity is regulated as follows. Transactivation activity is enhanced by transcriptional coactivator POU2AF1. Transcription factor that specifically binds to the octamer motif (5'-ATTTGCAT-3'). Regulates IL6 expression in B cells with POU2AF1. Regulates transcription in a number of tissues in addition to activating immunoglobulin gene expression. Modulates transcription transactivation by NR3C1, AR and PGR. Its function is as follows. Activates the U2 small nuclear RNA (snRNA) promoter. This is POU domain, class 2, transcription factor 2 from Homo sapiens (Human).